A 402-amino-acid chain; its full sequence is L-threonine ammonia-lyase (402 aa).

The residue at position 51 (Lys-51) is an N6-(pyridoxal phosphate)lysine. Pyridoxal 5'-phosphate-binding positions include Asn-78, 178 to 181 (GGGL), and Ser-302. The ACT domain occupies 327 to 402 (KLKVELDDLP…GVGYLVDVLK (76 aa)).

This sequence belongs to the serine/threonine dehydratase family. The cofactor is pyridoxal 5'-phosphate.

It carries out the reaction L-threonine = 2-oxobutanoate + NH4(+). It catalyses the reaction L-serine = pyruvate + NH4(+). Its pathway is amino-acid biosynthesis; L-isoleucine biosynthesis; 2-oxobutanoate from L-threonine: step 1/1. Catalyzes the conversion of threonine to 2-oxobutanoate and ammonia. Functions in the threonine-dependent pathway of isoleucine biosynthesis, which is the minor pathway for isoleucine biosynthesis in G.sulfurreducens. Also displays serine ammonia-lyase activity, yielding pyruvate from L-serine. The chain is L-threonine ammonia-lyase from Geobacter sulfurreducens (strain ATCC 51573 / DSM 12127 / PCA).